The primary structure comprises 230 residues: uncharacterized protein (230 aa).

Over residues 1–11 (MPVPSVTVTTD) the composition is skewed to polar residues. Residues 1-88 (MPVPSVTVTT…TLKRPTSNSI (88 aa)) form a disordered region. A compositionally biased stretch (basic and acidic residues) spans 63–73 (DDQHRHSDVHS). Residues 79–88 (TLKRPTSNSI) are compositionally biased toward polar residues. Serine 106 carries the post-translational modification Phosphoserine. Positions 156–179 (LKREDSRVSSTKKEHINDHTDMHS) are enriched in basic and acidic residues. Residues 156 to 203 (LKREDSRVSSTKKEHINDHTDMHSTRSKVTTNSQGSSLEPNKLNMAVE) are disordered. Polar residues predominate over residues 182–194 (SKVTTNSQGSSLE).

This is an uncharacterized protein from Saccharomyces cerevisiae (strain ATCC 204508 / S288c) (Baker's yeast).